We begin with the raw amino-acid sequence, 475 residues long: Adenylyl cyclase-associated protein 1 (475 aa).

At alanine 2 the chain carries N-acetylalanine. Tyrosine 31 is modified (phosphotyrosine). The residue at position 34 (serine 34) is a Phosphoserine. Lysine 81 carries the N6-acetyllysine modification. Disordered regions lie at residues 216 to 255 (ELSG…ASRS) and 278 to 318 (MKTH…TKKE). Residues 218-228 (SGLPSGPSAGS) show a composition bias toward low complexity. Positions 229–242 (GPPPPPPGPPPPPV) are enriched in pro residues. A compositionally biased stretch (low complexity) spans 243 to 255 (STSSGSDESASRS). The residue at position 287 (lysine 287) is an N6-methyllysine. Serine 290, serine 295, and serine 301 each carry phosphoserine. At threonine 307 the chain carries Phosphothreonine. Phosphoserine is present on residues serine 308 and serine 310. One can recognise a C-CAP/cofactor C-like domain in the interval 313–453 (PATKKEPAVL…EGGDFNEFPV (141 aa)). Lysine 348 is covalently cross-linked (Glycyl lysine isopeptide (Lys-Gly) (interchain with G-Cter in SUMO1)).

Belongs to the CAP family. As to quaternary structure, homodimer. Binds actin monomers.

It localises to the cell membrane. Functionally, directly regulates filament dynamics and has been implicated in a number of complex developmental and morphological processes, including mRNA localization and the establishment of cell polarity. The protein is Adenylyl cyclase-associated protein 1 (CAP1) of Pongo abelii (Sumatran orangutan).